Consider the following 804-residue polypeptide: Putative mRNA-capping enzyme P5 (804 aa).

This sequence belongs to the phytoreovirus protein P5 family.

It is found in the virion. The protein localises to the host cytoplasm. The enzyme catalyses a 5'-end diphospho-ribonucleoside in mRNA + GTP + H(+) = a 5'-end (5'-triphosphoguanosine)-ribonucleoside in mRNA + diphosphate. It participates in mRNA processing; mRNA capping. In terms of biological role, enzyme involved in mRNA capping (Potential). Binds to GTP and might have guanylyltransferase activity. Together with the RNA-directed RNA polymerase P1 and protein P7, forms an transcriptional complex positioned near the channels situated at each of the five-fold vertices of the core. In Catharanthus roseus (Madagascar periwinkle), this protein is Putative mRNA-capping enzyme P5.